Here is a 769-residue protein sequence, read N- to C-terminus: Wall-associated receptor kinase-like 10 (769 aa).

An N-terminal signal peptide occupies residues M1–A24. At S25 to P358 the chain is on the extracellular side. N-linked (GlcNAc...) asparagine glycosylation is found at N58, N114, N134, N182, N187, N237, N262, and N296. Residues C291–C351 form an atypical EGF-like region. Disulfide bonds link C293–C305, C327–C342, and C337–C351. A helical membrane pass occupies residues L359–L379. The Cytoplasmic portion of the chain corresponds to Y380 to R769. In terms of domain architecture, Protein kinase spans F433–E718. ATP is bound by residues L439–V447 and K461. Y506 carries the phosphotyrosine modification. D559 functions as the Proton acceptor in the catalytic mechanism. 2 positions are modified to phosphothreonine: T593 and T598. Y606 carries the phosphotyrosine modification.

The protein belongs to the protein kinase superfamily. Ser/Thr protein kinase family.

Its subcellular location is the membrane. The enzyme catalyses L-seryl-[protein] + ATP = O-phospho-L-seryl-[protein] + ADP + H(+). It catalyses the reaction L-threonyl-[protein] + ATP = O-phospho-L-threonyl-[protein] + ADP + H(+). Functionally, serine/threonine-protein kinase that may function as a signaling receptor of extracellular matrix component. This chain is Wall-associated receptor kinase-like 10 (WAKL10), found in Arabidopsis thaliana (Mouse-ear cress).